Reading from the N-terminus, the 72-residue chain is Gene 83 protein (72 aa).

This chain is Gene 83 protein (83), found in Mycobacterium phage L5 (Mycobacteriophage L5).